Reading from the N-terminus, the 202-residue chain is LexA repressor (202 aa).

The segment at residues 28-48 (RAEIAQRLGFRSPNAAEEHLK) is a DNA-binding region (H-T-H motif). Residues serine 119 and lysine 156 each act as for autocatalytic cleavage activity in the active site.

It belongs to the peptidase S24 family. Homodimer.

The catalysed reaction is Hydrolysis of Ala-|-Gly bond in repressor LexA.. Represses a number of genes involved in the response to DNA damage (SOS response), including recA and lexA. Binds to the 16 bp palindromic sequence 5'-CTGTATATATATACAG-3'. In the presence of single-stranded DNA, RecA interacts with LexA causing an autocatalytic cleavage which disrupts the DNA-binding part of LexA, leading to derepression of the SOS regulon and eventually DNA repair. This chain is LexA repressor, found in Citrobacter koseri (strain ATCC BAA-895 / CDC 4225-83 / SGSC4696).